A 505-amino-acid polypeptide reads, in one-letter code: MAQIDFRKKINWHRRYRSPQGVKTEHEILRIFESDRGRIINSPAIRRLQQKTQVFPLERNAAVRTRLTHSMEVQQVGRYIAKEILSRLKELKLLEAYGLDELTGPFESIVEMSCLMHDIGNPPFGHFGEAAINDWFRQRLHPEDAESQPLTDDRCSVAVLRLRDGEEPLNELRRKIRQDLCHFEGNAQGIRLVHTLMRMNLTWAQVGGILKYTRPAWWRGETPETHHYLMKKPGYYLSEEAYIARLRKELNLALYSRFPLTWIMEAADDISYCVADLEDAVEKRIFTVEQLYHHLHEAWGQHEKGSLFSLVVENAWEKSRSNSLSRSTEDQFFMYLRVNTLNKLVPYAAQRFIDNLPAIFAGTFNHALLEDASECSDLLKLYKNVAVKHVFSHPDVEQLELQGYRVISGLLEIYRPLLSLSLSDFTELVEKERVKRSPIESRLFHKLSTRHRLAYVEAVSKLPSDSPEFPLWEYYYRCRLLQDYISGMTDLYAWDEYRRLMAVEQ.

The HD domain occupies 66 to 273; sequence RLTHSMEVQQ…MEAADDISYC (208 aa).

This sequence belongs to the dGTPase family. Type 1 subfamily. In terms of assembly, homotetramer. It depends on Mg(2+) as a cofactor.

The enzyme catalyses dGTP + H2O = 2'-deoxyguanosine + triphosphate + H(+). Functionally, dGTPase preferentially hydrolyzes dGTP over the other canonical NTPs. This is Deoxyguanosinetriphosphate triphosphohydrolase from Escherichia coli O157:H7.